The primary structure comprises 432 residues: Adenosylhomocysteinase (432 aa).

Ser-2 carries the N-acetylserine modification. Substrate contacts are provided by Thr-57, Asp-131, and Glu-156. 157–159 contributes to the NAD(+) binding site; that stretch reads TTT. At Ser-183 the chain carries Phosphoserine. Substrate-binding residues include Lys-186 and Asp-190. The residue at position 186 (Lys-186) is an N6-(2-hydroxyisobutyryl)lysine. Phosphotyrosine is present on Tyr-193. Residues 222–227, Glu-243, Asn-248, 299–301, Asn-346, and His-353 contribute to the NAD(+) site; these read GDVGKG and IGH.

Belongs to the adenosylhomocysteinase family. As to quaternary structure, homotetramer. Interaction with AHCYL1. NAD(+) is required as a cofactor.

The protein localises to the cytoplasm. The protein resides in the melanosome. It localises to the nucleus. Its subcellular location is the endoplasmic reticulum. The enzyme catalyses S-adenosyl-L-homocysteine + H2O = L-homocysteine + adenosine. The protein operates within amino-acid biosynthesis; L-homocysteine biosynthesis; L-homocysteine from S-adenosyl-L-homocysteine: step 1/1. Functionally, catalyzes the hydrolysis of S-adenosyl-L-homocysteine to form adenosine and homocysteine. Binds copper ions. The chain is Adenosylhomocysteinase (AHCY) from Homo sapiens (Human).